A 168-amino-acid polypeptide reads, in one-letter code: Ribonuclease H (168 aa).

The RNase H type-1 domain maps to 10–151 (NNIPVKIYTD…ADKLATNGKI (142 aa)). Mg(2+) is bound by residues aspartate 19, glutamate 57, aspartate 79, and aspartate 143.

The protein belongs to the RNase H family. In terms of assembly, monomer. Requires Mg(2+) as cofactor.

Its subcellular location is the cytoplasm. It catalyses the reaction Endonucleolytic cleavage to 5'-phosphomonoester.. Functionally, endonuclease that specifically degrades the RNA of RNA-DNA hybrids. This Orientia tsutsugamushi (strain Boryong) (Rickettsia tsutsugamushi) protein is Ribonuclease H.